The sequence spans 167 residues: Ammonium/H(+) antiporter subunit AmhM (167 aa).

Residues 79 to 163 (IDRIKLIRKQ…IQKFEELCAC (85 aa)) form the RCK C-terminal domain.

As to quaternary structure, interacts with AmhT.

Its subcellular location is the cell membrane. Functionally, modulates the activity of the ammonium/proton antiporter AmhT. This Alkalihalophilus pseudofirmus (strain ATCC BAA-2126 / JCM 17055 / OF4) (Bacillus pseudofirmus) protein is Ammonium/H(+) antiporter subunit AmhM (amhM).